We begin with the raw amino-acid sequence, 729 residues long: Neurochondrin (729 aa).

Position 2 is an N-acetylserine (S2). Phosphoserine is present on S2. S-palmitoyl cysteine attachment occurs at residues C3 and C4. Residue R75 is modified to Asymmetric dimethylarginine. S448 is modified (phosphoserine).

The protein belongs to the neurochondrin family. As to quaternary structure, interacts with MCHR1. Interacts with SEMA4C. Interacts with DIAPH1 (via FH3 domain). Interacts with GRM5. Palmitoylated. Palmitoylation by ZDHHC1, ZDHHC3 and ZDHHC11 regulates the association of NCDN with endosome membranes. May also be palmitoylated by ZDHHC7. As to expression, expressed in brain and in peripheral nervous system (at protein level). Weakly expressed in neurites.

It is found in the cytoplasm. The protein localises to the cytosol. The protein resides in the endosome membrane. Its subcellular location is the cell projection. It localises to the dendrite. It is found in the postsynapse. Probably involved in signal transduction, in the nervous system, via increasing cell surface localization of GRM5 and positively regulating its signaling. Required for the spatial learning process. Acts as a negative regulator of Ca(2+)-calmodulin-dependent protein kinase 2 (CaMK2) phosphorylation. May play a role in modulating melanin-concentrating hormone-mediated functions via its interaction with MCHR1 that interferes with G protein-coupled signal transduction. May be involved in bone metabolism. May also be involved in neurite outgrowth. The polypeptide is Neurochondrin (Ncdn) (Rattus norvegicus (Rat)).